Consider the following 261-residue polypeptide: Indole-3-glycerol phosphate synthase (261 aa).

It belongs to the TrpC family.

It catalyses the reaction 1-(2-carboxyphenylamino)-1-deoxy-D-ribulose 5-phosphate + H(+) = (1S,2R)-1-C-(indol-3-yl)glycerol 3-phosphate + CO2 + H2O. It functions in the pathway amino-acid biosynthesis; L-tryptophan biosynthesis; L-tryptophan from chorismate: step 4/5. This chain is Indole-3-glycerol phosphate synthase, found in Campylobacter curvus (strain 525.92).